We begin with the raw amino-acid sequence, 122 residues long: Large ribosomal subunit protein uL14 (122 aa).

The protein belongs to the universal ribosomal protein uL14 family. Part of the 50S ribosomal subunit. Forms a cluster with proteins L3 and L19. In the 70S ribosome, L14 and L19 interact and together make contacts with the 16S rRNA in bridges B5 and B8.

Its function is as follows. Binds to 23S rRNA. Forms part of two intersubunit bridges in the 70S ribosome. This chain is Large ribosomal subunit protein uL14, found in Bifidobacterium adolescentis (strain ATCC 15703 / DSM 20083 / NCTC 11814 / E194a).